The chain runs to 37 residues: Large ribosomal subunit protein bL36 (37 aa).

The protein belongs to the bacterial ribosomal protein bL36 family.

This Janthinobacterium sp. (strain Marseille) (Minibacterium massiliensis) protein is Large ribosomal subunit protein bL36.